A 463-amino-acid polypeptide reads, in one-letter code: Phosphoglucosamine mutase (463 aa).

The active-site Phosphoserine intermediate is serine 101. Mg(2+) contacts are provided by serine 101, aspartate 256, aspartate 258, and aspartate 260. Position 101 is a phosphoserine (serine 101).

The protein belongs to the phosphohexose mutase family. The cofactor is Mg(2+). Activated by phosphorylation.

The enzyme catalyses alpha-D-glucosamine 1-phosphate = D-glucosamine 6-phosphate. In terms of biological role, catalyzes the conversion of glucosamine-6-phosphate to glucosamine-1-phosphate. In Desulforapulum autotrophicum (strain ATCC 43914 / DSM 3382 / VKM B-1955 / HRM2) (Desulfobacterium autotrophicum), this protein is Phosphoglucosamine mutase.